The following is a 236-amino-acid chain: Aspartate/glutamate leucyltransferase (236 aa).

The protein belongs to the R-transferase family. Bpt subfamily.

The protein localises to the cytoplasm. The catalysed reaction is N-terminal L-glutamyl-[protein] + L-leucyl-tRNA(Leu) = N-terminal L-leucyl-L-glutamyl-[protein] + tRNA(Leu) + H(+). The enzyme catalyses N-terminal L-aspartyl-[protein] + L-leucyl-tRNA(Leu) = N-terminal L-leucyl-L-aspartyl-[protein] + tRNA(Leu) + H(+). In terms of biological role, functions in the N-end rule pathway of protein degradation where it conjugates Leu from its aminoacyl-tRNA to the N-termini of proteins containing an N-terminal aspartate or glutamate. This is Aspartate/glutamate leucyltransferase from Halorhodospira halophila (strain DSM 244 / SL1) (Ectothiorhodospira halophila (strain DSM 244 / SL1)).